Here is a 571-residue protein sequence, read N- to C-terminus: Penicillin-binding protein activator LpoA (571 aa).

An N-terminal signal peptide occupies residues 1 to 26 (MMTILLQHTHLKNRLMPFLLALFLAG). The N-palmitoyl cysteine moiety is linked to residue cysteine 27. Cysteine 27 carries the S-diacylglycerol cysteine lipid modification.

Belongs to the LpoA family. In terms of assembly, interacts with PBP1a.

It localises to the cell outer membrane. Functionally, regulator of peptidoglycan synthesis that is essential for the function of penicillin-binding protein 1A (PBP1a). This is Penicillin-binding protein activator LpoA from Pasteurella multocida (strain Pm70).